Consider the following 115-residue polypeptide: Flagellar transcriptional regulator FlhD (115 aa).

It belongs to the FlhD family. In terms of assembly, homodimer; disulfide-linked. Forms a heterohexamer composed of two FlhC and four FlhD subunits. Each FlhC binds a FlhD dimer, forming a heterotrimer, and a hexamer assembles by dimerization of two heterotrimers.

It is found in the cytoplasm. Its function is as follows. Functions in complex with FlhC as a master transcriptional regulator that regulates transcription of several flagellar and non-flagellar operons by binding to their promoter region. Activates expression of class 2 flagellar genes, including fliA, which is a flagellum-specific sigma factor that turns on the class 3 genes. Also regulates genes whose products function in a variety of physiological pathways. In Edwardsiella ictaluri (strain 93-146), this protein is Flagellar transcriptional regulator FlhD.